Consider the following 566-residue polypeptide: DNA ligase B (566 aa).

K125 acts as the N6-AMP-lysine intermediate in catalysis.

This sequence belongs to the NAD-dependent DNA ligase family. LigB subfamily.

It carries out the reaction NAD(+) + (deoxyribonucleotide)n-3'-hydroxyl + 5'-phospho-(deoxyribonucleotide)m = (deoxyribonucleotide)n+m + AMP + beta-nicotinamide D-nucleotide.. Its function is as follows. Catalyzes the formation of phosphodiester linkages between 5'-phosphoryl and 3'-hydroxyl groups in double-stranded DNA using NAD as a coenzyme and as the energy source for the reaction. The polypeptide is DNA ligase B (Pseudomonas putida (strain GB-1)).